Consider the following 350-residue polypeptide: SUMO-activating enzyme subunit 1 (350 aa).

Residue methionine 1 is modified to N-acetylmethionine. N-acetylvaline; in SUMO-activating enzyme subunit 1, N-terminally processed is present on valine 2. Position 16 is a phosphoserine (serine 16). The residue at position 202 (lysine 202) is an N6-acetyllysine.

Belongs to the ubiquitin-activating E1 family. As to quaternary structure, heterodimer of SAE1 and UBA2/SAE2. The heterodimer corresponds to the two domains that are encoded on a single polypeptide chain in ubiquitin-activating enzyme E1. Interacts with UBE2I. In terms of tissue distribution, broadly expressed, with highest levels in testis.

It localises to the nucleus. The protein operates within protein modification; protein sumoylation. In terms of biological role, the heterodimer acts as an E1 ligase for SUMO1, SUMO2, SUMO3, and probably SUMO4. It mediates ATP-dependent activation of SUMO proteins followed by formation of a thioester bond between a SUMO protein and a conserved active site cysteine residue on UBA2/SAE2. The polypeptide is SUMO-activating enzyme subunit 1 (Sae1) (Mus musculus (Mouse)).